Reading from the N-terminus, the 286-residue chain is UPF0761 membrane protein KPN78578_41360 (286 aa).

The next 7 helical transmembrane spans lie at 44–64 (LLSL…FPMF), 74–94 (FIFA…IEQF), 104–124 (VGAF…DSAL), 140–160 (FAVY…SLAI), 183–203 (LFPL…VPTT), 210–230 (AVIG…AFAL), and 244–264 (VISV…IVLL).

It belongs to the UPF0761 family.

Its subcellular location is the cell inner membrane. In Klebsiella pneumoniae subsp. pneumoniae (strain ATCC 700721 / MGH 78578), this protein is UPF0761 membrane protein KPN78578_41360.